A 177-amino-acid polypeptide reads, in one-letter code: Apoptosis regulatory protein Siva (177 aa).

Position 34 is a phosphotyrosine; by ABL2 (tyrosine 34). Positions arginine 36–aspartate 55 are interaction with BCL2L1 isoform Bcl-x(L) and inhibition of BCL2L1 anti-apoptotic activity.

Binds through its N-terminal region to the C-terminus of CD27 and to PXMP2/PMP22. Binds to the C-terminus of TNFRSF18/GITR. Binds to BCL2L1/BCLX isoform Bcl-x(L) but not to BAX. Zn(2+) serves as cofactor. In terms of tissue distribution, in post-ischemic kidney, found in cells lining the S3 segment of proximal tubules at 12 hours and 1 day post-ischemia. At five and seven days post-ischemia, found in epithelial cells of papillary proliferations in regenerating tubules.

The protein localises to the cytoplasm. It is found in the nucleus. In terms of biological role, induces CD27-mediated apoptosis. Inhibits BCL2L1 isoform Bcl-x(L) anti-apoptotic activity. Inhibits activation of NF-kappa-B and promotes T-cell receptor-mediated apoptosis. The chain is Apoptosis regulatory protein Siva (Siva1) from Rattus norvegicus (Rat).